The following is a 284-amino-acid chain: uncharacterized protein (284 aa).

Residues 1-24 (MLYSRESRTTVLFLALVTSLTVLC) form the signal peptide. Over 25 to 84 (HSVDVTTVFTTSTITEITTVTAAPQPQNKAETALNTATNIIQTMQFLFNCAPFKWKGPLK) the chain is Cytoplasmic. The helical transmembrane segment at 85–104 (ITSCALNFIVLLLTAWGYLL) threads the bilayer. Topologically, residues 105–284 (KYLQENKLNS…SVHMYSSSLL (180 aa)) are extracellular. A glycan (N-linked (GlcNAc...) asparagine) is linked at Asn270.

The protein to yeast YNL033w.

The protein localises to the cell membrane. This is an uncharacterized protein from Saccharomyces cerevisiae (strain ATCC 204508 / S288c) (Baker's yeast).